We begin with the raw amino-acid sequence, 404 residues long: Putative transporter AmpG 2 (404 aa).

12 consecutive transmembrane segments (helical) span residues isoleucine 11 to threonine 31, isoleucine 49 to leucine 69, tyrosine 84 to asparagine 104, phenylalanine 109 to leucine 129, phenylalanine 154 to tryptophan 174, valine 177 to leucine 197, tryptophan 224 to methionine 244, leucine 261 to leucine 281, valine 294 to tyrosine 311, isoleucine 315 to phenylalanine 337, isoleucine 353 to tyrosine 373, and leucine 378 to isoleucine 398.

The protein belongs to the major facilitator superfamily.

The protein resides in the cell inner membrane. In Rickettsia bellii (strain RML369-C), this protein is Putative transporter AmpG 2 (ampG2).